A 303-amino-acid polypeptide reads, in one-letter code: tRNA dimethylallyltransferase (303 aa).

11 to 18 (GPTGVGKS) is an ATP binding site. 13-18 (TGVGKS) is a binding site for substrate. Interaction with substrate tRNA stretches follow at residues 36-39 (DSRQ) and 159-163 (QRVLR).

This sequence belongs to the IPP transferase family. As to quaternary structure, monomer. Mg(2+) is required as a cofactor.

The catalysed reaction is adenosine(37) in tRNA + dimethylallyl diphosphate = N(6)-dimethylallyladenosine(37) in tRNA + diphosphate. Catalyzes the transfer of a dimethylallyl group onto the adenine at position 37 in tRNAs that read codons beginning with uridine, leading to the formation of N6-(dimethylallyl)adenosine (i(6)A). This is tRNA dimethylallyltransferase from Lawsonia intracellularis (strain PHE/MN1-00).